The following is a 160-amino-acid chain: Cytochrome c-type biogenesis protein CcmE (160 aa).

Over 1 to 8 (MNPRRKQR) the chain is Cytoplasmic. The chain crosses the membrane as a helical; Signal-anchor for type II membrane protein span at residues 9–29 (LTWVAILVIGVSVATGLMLYA). The Periplasmic portion of the chain corresponds to 30–160 (LSQSIDLFYT…PNTVEKGEGQ (131 aa)). Residues H130 and Y134 each coordinate heme.

This sequence belongs to the CcmE/CycJ family.

The protein resides in the cell inner membrane. In terms of biological role, heme chaperone required for the biogenesis of c-type cytochromes. Transiently binds heme delivered by CcmC and transfers the heme to apo-cytochromes in a process facilitated by CcmF and CcmH. In Idiomarina loihiensis (strain ATCC BAA-735 / DSM 15497 / L2-TR), this protein is Cytochrome c-type biogenesis protein CcmE.